The following is a 235-amino-acid chain: Purine nucleoside phosphorylase DeoD-type (235 aa).

Position 4 (His4) interacts with a purine D-ribonucleoside. Phosphate-binding positions include Gly20, Arg24, Arg43, and 87-90 (RVGT). Residues 179 to 181 (EME) and 203 to 204 (SN) contribute to the a purine D-ribonucleoside site.

It belongs to the PNP/UDP phosphorylase family. In terms of assembly, homohexamer; trimer of homodimers.

It catalyses the reaction a purine D-ribonucleoside + phosphate = a purine nucleobase + alpha-D-ribose 1-phosphate. The catalysed reaction is a purine 2'-deoxy-D-ribonucleoside + phosphate = a purine nucleobase + 2-deoxy-alpha-D-ribose 1-phosphate. In terms of biological role, catalyzes the reversible phosphorolytic breakdown of the N-glycosidic bond in the beta-(deoxy)ribonucleoside molecules, with the formation of the corresponding free purine bases and pentose-1-phosphate. In Levilactobacillus brevis (strain ATCC 367 / BCRC 12310 / CIP 105137 / JCM 1170 / LMG 11437 / NCIMB 947 / NCTC 947) (Lactobacillus brevis), this protein is Purine nucleoside phosphorylase DeoD-type.